The primary structure comprises 523 residues: MVAPGLVLGLVLPLILWADRSAGIGFRFASYINNDMVLQKEPAGAVIWGFGTPGATVTVTLRQGRETIMKKVTSVKAHSDTWMVVLDPMKPGGPFEVMAQQTLEKINFTLRVHDVLFGDVWLCSGQSNMQMTVLQIFNATRELSNTAAYQSVRILSVSPTQAEQELEDLVAVDLQWSKPTSENLGHGYFKYMSAVCWLFGRHLYDTLQYPIGLIASSWGGTPIEAWSSGRSLKACGVPKQGSVPYDSVTGPSKHSVLWNAMIHPLCNMTLKGVVWYQGESNINYNTDLYNCTFPALIEDWRETFHRGSQGQTERFFPFGLVQLSSDLSKKSSDDGFPQIRWHQTADFGYVPNPKMPNTFMAVAMDLCDRDSPFGSIHPRDKQTVAYRLHLGARALAYGEKNLTFEGPLPEKIELLAHKGLLNLTYYQQIQVQKKDNKIFEISCCSDRRCKWLPASMSTVSTQSLTLAIDSCRGTVVALRYAWTTWPCEYKQCPLYHPSSALPAPPFIAFITDQDPGHQSNVAK.

A signal peptide spans 1 to 23 (MVAPGLVLGLVLPLILWADRSAG). N-linked (GlcNAc...) asparagine glycans are attached at residues N107, N138, N267, N290, N401, and N422.

The protein localises to the lysosome. It catalyses the reaction N-acetyl-9-O-acetylneuraminate + H2O = N-acetylneuraminate + acetate + H(+). It carries out the reaction an Ac-O-9-sialoglycoconjugate + H2O = a sialoglycoconjugate + acetate + H(+). Its function is as follows. Catalyzes the removal of O-acetyl ester groups from position 9 of the free diacetylated sialate N-acetyl-9-O-acetylneuraminate (Neu5,9Ac2) in the cytosol and of the diacetylated sialate residues of sialylglycoconjugates in the lysosomes. Together with the sialate-O-acetyltransferase they regulate the balance of acetylated sialoglycoconjugates, key players in various processes such as cell-cell interactions, host-pathogen recognition, and tumor antigenicity. The sequence is that of Sialate O-acetylesterase (SIAE) from Pongo abelii (Sumatran orangutan).